The sequence spans 189 residues: Peptidyl-tRNA hydrolase (189 aa).

Residue Y14 participates in tRNA binding. H19 serves as the catalytic Proton acceptor. The tRNA site is built by Y64, N66, and N112.

Belongs to the PTH family. Monomer.

It localises to the cytoplasm. The catalysed reaction is an N-acyl-L-alpha-aminoacyl-tRNA + H2O = an N-acyl-L-amino acid + a tRNA + H(+). In terms of biological role, hydrolyzes ribosome-free peptidyl-tRNAs (with 1 or more amino acids incorporated), which drop off the ribosome during protein synthesis, or as a result of ribosome stalling. Its function is as follows. Catalyzes the release of premature peptidyl moieties from peptidyl-tRNA molecules trapped in stalled 50S ribosomal subunits, and thus maintains levels of free tRNAs and 50S ribosomes. The protein is Peptidyl-tRNA hydrolase of Dehalococcoides mccartyi (strain CBDB1).